The sequence spans 935 residues: Progesterone receptor (935 aa).

Residues 1–49 (MTELKAKGXRAPHVAGSPSSPKVXSPLPCRQAAXPFPGSQTSDTLPEVS) form a disordered region. An AF3; mediates transcriptional activation region spans residues 1–164 (MTELKAKGXR…SATQRVLSRL (164 aa)). The segment at 1–568 (MTELKAKGXR…YSFESLPQKI (568 aa)) is modulating, Pro-Rich. The span at 17-28 (SPSSPKVXSPLP) shows a compositional bias: low complexity. Serine 20 is modified (phosphoserine). The LXXL motif 1 motif lies at 55-59 (LDGLL). The segment at 61-255 (PRICQGQDPP…GAAAGGGAAA (195 aa)) is disordered. Phosphoserine is present on serine 81. An LXXL motif 2 motif is present at residues 115–119 (LDTLW). Phosphoserine is present on residues serine 130 and serine 162. Residues 165-305 (MSRSGGKAGD…LATTVTDFIH (141 aa)) form a mediates transcriptional transrepression region. Positions 183-187 (KVLPR) match the Nuclear localization signal motif. Phosphoserine is present on serine 190. Positions 191–203 (PSRQLLLPTTGSP) are enriched in polar residues. Residue serine 213 is modified to Phosphoserine. The span at 220 to 231 (EVEEEDGSESED) shows a compositional bias: acidic residues. Over residues 232–246 (SAGPLLKGKPRALGG) the composition is skewed to low complexity. Serine 294 carries the post-translational modification Phosphoserine; by MAPK1. The disordered stretch occupies residues 331–365 (GGAGAASAFAPPRSSPSASSTPVPGGDFPDCAYAP). Residues 335–356 (AASAFAPPRSSPSASSTPVPGG) show a composition bias toward low complexity. Position 345 is a phosphoserine; by MAPK (serine 345). Lysine 388 is covalently cross-linked (Glycyl lysine isopeptide (Lys-Gly) (interchain with G-Cter in SUMO); alternate). Lysine 388 is covalently cross-linked (Glycyl lysine isopeptide (Lys-Gly) (interchain with G-Cter in ubiquitin); alternate). A Phosphoserine; by CDK2 modification is found at serine 400. The interval 415-452 (PDFPLGPPPPLPPRAPPSRPGEAAVTAAPASASVSSAS) is disordered. Positions 418-433 (PLGPPPPLPPRAPPSR) are enriched in pro residues. The span at 434–452 (PGEAAVTAAPASASVSSAS) shows a compositional bias: low complexity. The tract at residues 456-548 (STLECILYKA…VYPPYLNYLR (93 aa)) is AF1; mediates transcriptional activation. A Glycyl lysine isopeptide (Lys-Gly) (interchain with G-Cter in SUMO) cross-link involves residue lysine 533. NR C4-type zinc fingers lie at residues 569-589 (CLICGDEASGCHYGVLTCGSC) and 605-629 (CAGRNDCIVDKIRRKNCPACRLRKC). The segment at residues 569–641 (CLICGDEASG…AGMVLGGRKF (73 aa)) is a DNA-binding region (nuclear receptor). Serine 678 carries the post-translational modification Phosphoserine. The 235-residue stretch at 681 to 915 (QDIQLIPPLI…EFPEMMSEVI (235 aa)) folds into the NR LBD domain. Residues 689–935 (LINLLLSIEP…MVKPLLFHKK (247 aa)) are AF2; mediates transcriptional activation.

The protein belongs to the nuclear hormone receptor family. As to quaternary structure, interacts with SMARD1 and UNC45A. Interacts with CUEDC2; the interaction promotes ubiquitination, decreases sumoylation, and represses transcriptional activity. Interacts with PIAS3; the interaction promotes sumoylation of PR in a hormone-dependent manner, inhibits DNA-binding, and alters nuclear export. Interacts with SP1; the interaction requires ligand-induced phosphorylation on Ser-345 by ERK1/2-MAPK. Interacts with PRMT2. Interacts with NCOA2 and NCOA1. Interacts with KLF9. Interacts with GTF2B. In terms of processing, phosphorylated on multiple serine sites. Several of these sites are hormone-dependent. Phosphorylation on Ser-294 is highly hormone-dependent and modulates ubiquitination and sumoylation on Lys-388. Phosphorylation on Ser-345 also requires induction by hormone. Basal phosphorylation on Ser-81, Ser-162, Ser-190 and Ser-400 is increased in response to progesterone and can be phosphorylated in vitro by the CDK2-A1 complex. Increased levels of phosphorylation on Ser-400 also in the presence of EGF, heregulin, IGF, PMA and FBS. Phosphorylation at this site by CDK2 is ligand-independent, and increases nuclear translocation and transcriptional activity. Phosphorylation at Ser-162 and Ser-294, but not at Ser-190, is impaired during the G(2)/M phase of the cell cycle. Phosphorylation on Ser-345 by ERK1/2 MAPK is required for interaction with SP1. Post-translationally, sumoylation is hormone-dependent and represses transcriptional activity. Sumoylation on all three sites is enhanced by PIAS3. Desumoylated by SENP1. Sumoylation on Lys-388, the main site of sumoylation, is repressed by ubiquitination on the same site, and modulated by phosphorylation at Ser-294. Ubiquitination is hormone-dependent and represses sumoylation on the same site. Promoted by MAPK-mediated phosphorylation on Ser-294. In terms of processing, palmitoylated by ZDHHC7 and ZDHHC21. Palmitoylation is required for plasma membrane targeting and for rapid intracellular signaling via ERK and AKT kinases and cAMP generation.

Its subcellular location is the nucleus. The protein localises to the cytoplasm. Its function is as follows. The steroid hormones and their receptors are involved in the regulation of eukaryotic gene expression and affect cellular proliferation and differentiation in target tissues. Transcriptional activator of several progesteron-dependent promoters in a variety of cell types. Involved in activation of SRC-dependent MAPK signaling on hormone stimulation. In Ateles paniscus (Black spider monkey), this protein is Progesterone receptor (PGR).